The following is a 313-amino-acid chain: Mitochondrial uncoupling protein 5 (313 aa).

Solcar repeat units lie at residues 4-108, 117-208, and 217-307; these read KGFA…IKGE, MPLM…VKET, and DGLG…VKKL. 6 helical membrane-spanning segments follow: residues 6 to 26, 77 to 97, 123 to 143, 182 to 202, 223 to 243, and 280 to 300; these read FAEG…LDLI, MRAL…YSTT, IGAG…ADVA, RGSS…LASY, VSAS…VDVI, and YKGF…LFVT.

This sequence belongs to the mitochondrial carrier (TC 2.A.29) family. In terms of tissue distribution, expressed in roots, leaves, stems and flowers.

It is found in the mitochondrion inner membrane. Its function is as follows. PUMPS are mitochondrial transporter proteins that create proton leaks across the inner mitochondrial membrane, thus uncoupling oxidative phosphorylation. This leads to a decrease in the efficiency of oxidative phosphorylation and an increase in heat production. May be involved in protecting plant cells against oxidative stress damage. Recombinant PUMP5, reconstituted into liposomes, transports a wide range of dicarboxylic acids including malate, oxaloacetate and succinate as well as phosphate, sulfate and thiosulfate. However, it is unknown if these transports are of any biological significance in vivo. The protein is Mitochondrial uncoupling protein 5 (PUMP5) of Arabidopsis thaliana (Mouse-ear cress).